Consider the following 239-residue polypeptide: Pyridoxine 5'-phosphate synthase (239 aa).

Asn-9 contacts 3-amino-2-oxopropyl phosphate. Residue 11–12 (DH) participates in 1-deoxy-D-xylulose 5-phosphate binding. Position 20 (Arg-20) interacts with 3-amino-2-oxopropyl phosphate. The active-site Proton acceptor is the His-45. 1-deoxy-D-xylulose 5-phosphate contacts are provided by Arg-47 and His-52. The active-site Proton acceptor is the Glu-72. Thr-102 is a binding site for 1-deoxy-D-xylulose 5-phosphate. His-189 acts as the Proton donor in catalysis. Residues Gly-190 and 211–212 (GH) each bind 3-amino-2-oxopropyl phosphate.

The protein belongs to the PNP synthase family. In terms of assembly, homooctamer; tetramer of dimers.

It is found in the cytoplasm. The catalysed reaction is 3-amino-2-oxopropyl phosphate + 1-deoxy-D-xylulose 5-phosphate = pyridoxine 5'-phosphate + phosphate + 2 H2O + H(+). Its pathway is cofactor biosynthesis; pyridoxine 5'-phosphate biosynthesis; pyridoxine 5'-phosphate from D-erythrose 4-phosphate: step 5/5. Its function is as follows. Catalyzes the complicated ring closure reaction between the two acyclic compounds 1-deoxy-D-xylulose-5-phosphate (DXP) and 3-amino-2-oxopropyl phosphate (1-amino-acetone-3-phosphate or AAP) to form pyridoxine 5'-phosphate (PNP) and inorganic phosphate. This is Pyridoxine 5'-phosphate synthase from Ehrlichia chaffeensis (strain ATCC CRL-10679 / Arkansas).